A 379-amino-acid chain; its full sequence is MRVLAAMSGGVDSAVAAARAVEAGHDVVGVHLALSRMPGTLRTGSRGCCTIEDSRDAWRACDVLGIPYYVWDFSERFKEDVVQDFIDEYAAGRTPNPCMRCNERIKFAALLEKAIALGFDAVCTGHYAKVIEDADGNRELHRAADWAKDQSYVLGVLTHEQLKHSMFPLADTPSKAEVRAEAERRGLSVANKPDSHDICFISDGDTRGWLAEKIDMTTGDIVDETGAKVGEHPGANAFTVGQRRGLKLGTPAADGKPRFVLEIRPKENKVVVGPEALLAIDEIRGIKVSWAGLPISEVATGAEFDCHAQVRAHGDPVPAIARVEAVTDESGVERAQLVVTLTDPLRGVAPGQTVVLYQGSRVLGQATIDAARSLQRQVL.

Residues 6–13 and Leu32 each bind ATP; that span reads AMSGGVDS. Cys101 functions as the Nucleophile in the catalytic mechanism. Cys101 and Cys199 are oxidised to a cystine. Residue Gly125 participates in ATP binding. The interaction with tRNA stretch occupies residues 148 to 150; it reads KDQ. Cys199 serves as the catalytic Cysteine persulfide intermediate.

This sequence belongs to the MnmA/TRMU family.

Its subcellular location is the cytoplasm. The catalysed reaction is S-sulfanyl-L-cysteinyl-[protein] + uridine(34) in tRNA + AH2 + ATP = 2-thiouridine(34) in tRNA + L-cysteinyl-[protein] + A + AMP + diphosphate + H(+). In terms of biological role, catalyzes the 2-thiolation of uridine at the wobble position (U34) of tRNA, leading to the formation of s(2)U34. The sequence is that of tRNA-specific 2-thiouridylase MnmA from Paenarthrobacter aurescens (strain TC1).